A 380-amino-acid chain; its full sequence is Crotonobetainyl-CoA reductase (380 aa).

It belongs to the acyl-CoA dehydrogenase family. As to quaternary structure, homotetramer. FAD is required as a cofactor.

The protein localises to the cytoplasm. The enzyme catalyses 4-(trimethylamino)butanoyl-CoA + oxidized [electron-transfer flavoprotein] + H(+) = crotonobetainyl-CoA + reduced [electron-transfer flavoprotein]. The protein operates within amine and polyamine metabolism; carnitine metabolism. Its function is as follows. Catalyzes the reduction of crotonobetainyl-CoA to gamma-butyrobetainyl-CoA. The chain is Crotonobetainyl-CoA reductase from Proteus sp. (strain LE138).